The primary structure comprises 432 residues: Pachytene checkpoint protein 2 homolog (432 aa).

M1 is subject to N-acetylmethionine. Position 179 to 186 (G179 to T186) interacts with ATP.

Belongs to the AAA ATPase family. PCH2 subfamily. Specifically interacts with the ligand binding domain of the thyroid receptor (TR). This interaction does not require the presence of thyroid hormone for its interaction. Interacts with HPV16 E1. Interacts with proteasome subunit PSMA8; to participate in meiosis progression during spermatogenesis.

Its function is as follows. Plays a key role in chromosome recombination and chromosome structure development during meiosis. Required at early steps in meiotic recombination that leads to non-crossovers pathways. Also needed for efficient completion of homologous synapsis by influencing crossover distribution along the chromosomes affecting both crossovers and non-crossovers pathways. Also required for development of higher-order chromosome structures and is needed for synaptonemal-complex formation. In males, required for efficient synapsis of the sex chromosomes and for sex body formation. Promotes early steps of the DNA double-strand breaks (DSBs) repair process upstream of the assembly of RAD51 complexes. Required for depletion of HORMAD1 and HORMAD2 from synapsed chromosomes. Plays a role in mitotic spindle assembly checkpoint (SAC) activation. In Homo sapiens (Human), this protein is Pachytene checkpoint protein 2 homolog (TRIP13).